The chain runs to 177 residues: Alkyl hydroperoxide reductase AhpD (177 aa).

The active-site Proton donor is Cys-131. A disulfide bond links Cys-131 and Cys-134. Cys-134 acts as the Cysteine sulfenic acid (-SOH) intermediate in catalysis.

It belongs to the AhpD family. In terms of assembly, homotrimer.

It catalyses the reaction N(6)-[(R)-dihydrolipoyl]-L-lysyl-[lipoyl-carrier protein] + a hydroperoxide = N(6)-[(R)-lipoyl]-L-lysyl-[lipoyl-carrier protein] + an alcohol + H2O. In terms of biological role, antioxidant protein with alkyl hydroperoxidase activity. Required for the reduction of the AhpC active site cysteine residues and for the regeneration of the AhpC enzyme activity. The chain is Alkyl hydroperoxide reductase AhpD from Streptomyces griseus subsp. griseus (strain JCM 4626 / CBS 651.72 / NBRC 13350 / KCC S-0626 / ISP 5235).